A 494-amino-acid chain; its full sequence is Probable cytosol aminopeptidase (494 aa).

The Mn(2+) site is built by Lys260 and Asp265. The active site involves Lys272. Mn(2+) is bound by residues Asp283, Asp342, and Glu344. The active site involves Arg346.

This sequence belongs to the peptidase M17 family. Mn(2+) is required as a cofactor.

It localises to the cytoplasm. The enzyme catalyses Release of an N-terminal amino acid, Xaa-|-Yaa-, in which Xaa is preferably Leu, but may be other amino acids including Pro although not Arg or Lys, and Yaa may be Pro. Amino acid amides and methyl esters are also readily hydrolyzed, but rates on arylamides are exceedingly low.. It carries out the reaction Release of an N-terminal amino acid, preferentially leucine, but not glutamic or aspartic acids.. Functionally, presumably involved in the processing and regular turnover of intracellular proteins. Catalyzes the removal of unsubstituted N-terminal amino acids from various peptides. In Bacillus cereus (strain Q1), this protein is Probable cytosol aminopeptidase.